The sequence spans 367 residues: CCCH-type zinc finger protein moe-3 (367 aa).

Residues 1–15 are compositionally biased toward basic and acidic residues; that stretch reads MSKVKGDLEKSDKRP. Residues 1–57 form a disordered region; it reads MSKVKGDLEKSDKRPPSSMSTGSADSGVFSSGVHASSPSHSQGSSSQSGPPSPTTQL. Residues 30-49 show a composition bias toward low complexity; it reads SSGVHASSPSHSQGSSSQSG. The stretch at 63-92 forms a coiled coil; it reads ETANLIAVNEQLRKEIAENKQIQTNQMRAL. The interval 107 to 126 is disordered; sequence SISPHHGFPQRPPRGERRMQ. C3H1-type zinc fingers lie at residues 130–158 and 172–200; these read SYKT…HGEE and KYKT…HPDN. Residues 235 to 268 are disordered; the sequence is NTRNSYNQQPPPMGGLEMQSSPMKSSSDSSHMRS. The span at 252–268 shows a compositional bias: low complexity; sequence MQSSPMKSSSDSSHMRS.

As to expression, exclusively expressed in the hermaphrodite gonad. Weakly distributed throughout gonadal oocytes from the mitotic stage to the developing diakinesis stage, with expression restricted to the distal region of the gonad.

Its function is as follows. Zinc-finger protein that may play a role in oocyte maturation and fertility. This Caenorhabditis elegans protein is CCCH-type zinc finger protein moe-3.